A 901-amino-acid chain; its full sequence is Protein translocase subunit SecA (901 aa).

Residues Q87, 105–109 (GEGKT), and D512 each bind ATP. Positions 858–891 (SHQDDDTAAAAALAAQTGDRKVGRNDPCPCGSGK) are disordered. The Zn(2+) site is built by C885, C887, C896, and H897.

This sequence belongs to the SecA family. Monomer and homodimer. Part of the essential Sec protein translocation apparatus which comprises SecA, SecYEG and auxiliary proteins SecDF-YajC and YidC. It depends on Zn(2+) as a cofactor.

Its subcellular location is the cell inner membrane. It is found in the cytoplasm. It carries out the reaction ATP + H2O + cellular proteinSide 1 = ADP + phosphate + cellular proteinSide 2.. Part of the Sec protein translocase complex. Interacts with the SecYEG preprotein conducting channel. Has a central role in coupling the hydrolysis of ATP to the transfer of proteins into and across the cell membrane, serving both as a receptor for the preprotein-SecB complex and as an ATP-driven molecular motor driving the stepwise translocation of polypeptide chains across the membrane. This is Protein translocase subunit SecA from Escherichia fergusonii (strain ATCC 35469 / DSM 13698 / CCUG 18766 / IAM 14443 / JCM 21226 / LMG 7866 / NBRC 102419 / NCTC 12128 / CDC 0568-73).